The chain runs to 415 residues: ATP-dependent RNA helicase RhlB (415 aa).

The Q motif motif lies at 9 to 37 (KKFSDFALYPPIVEVLDSKGFNNCTPIQA). In terms of domain architecture, Helicase ATP-binding spans 40-219 (LPTTLAGKDV…FEHMNNAEYV (180 aa)). 53-60 (AQTGTGKT) provides a ligand contact to ATP. Residues 165 to 168 (DEAD) carry the DEAD box motif. The region spanning 245–390 (RLLQTLIEEE…VSKYNSDALL (146 aa)) is the Helicase C-terminal domain. Positions 396-415 (PKRLTRRRSGAPRHNRKRPG) are disordered. A compositionally biased stretch (basic residues) spans 398–415 (RLTRRRSGAPRHNRKRPG).

The protein belongs to the DEAD box helicase family. RhlB subfamily. In terms of assembly, component of the RNA degradosome, which is a multiprotein complex involved in RNA processing and mRNA degradation.

The protein localises to the cytoplasm. The catalysed reaction is ATP + H2O = ADP + phosphate + H(+). DEAD-box RNA helicase involved in RNA degradation. Has RNA-dependent ATPase activity and unwinds double-stranded RNA. The protein is ATP-dependent RNA helicase RhlB of Sodalis glossinidius (strain morsitans).